A 736-amino-acid chain; its full sequence is DEAD-box ATP-dependent RNA helicase 21 (736 aa).

Residues 14–38 are a coiled coil; that stretch reads LTREEREKLALERRQAAVTDQRRSA. The segment covering 25 to 38 has biased composition (basic and acidic residues); the sequence is ERRQAAVTDQRRSA. Disordered stretches follow at residues 25 to 178 and 231 to 263; these read ERRQ…PKKR and KVAA…DKKE. The segment covering 46-58 has biased composition (pro residues); it reads PRPPPPPPPPLSN. Basic and acidic residues-rich tracts occupy residues 64–166 and 231–252; these read SSSH…DAIK and KVAA…GLDD. Positions 137–167 form a coiled coil; the sequence is DRDRERGDREKDRLEKMAEREREKELDAIKE. The Q motif motif lies at 315 to 343; it reads RKWSESKLGTELLRAVEKAGYKEPSPIQM. A Helicase ATP-binding domain is found at 346–541; the sequence is IPLGLQQRDV…RKYLRNPVVV (196 aa). Position 359 to 366 (359 to 366) interacts with ATP; that stretch reads AETGSGKT. Residues 472-475 carry the DEAD box motif; that stretch reads DEAD. The region spanning 568-712 is the Helicase C-terminal domain; the sequence is RLQKILTDLG…PVPPELARHE (145 aa). The segment at 704–736 is disordered; that stretch reads VPPELARHEASKFKPGSVPDRPPRRNDTVYATH.

Belongs to the DEAD box helicase family. DDX23/PRP28 subfamily.

It is found in the cytoplasm. The protein resides in the nucleus. It catalyses the reaction ATP + H2O = ADP + phosphate + H(+). Its function is as follows. ATP-dependent RNA helicase involved in mRNA splicing. May destabilize the U1/5'-splice site duplex to permit an effective competition for the 5'-splice site by the U6 snRNA, resulting in the switch between U1 and U6 at the 5'-splice site. May also act to unwind the U4/U6 base-pairing interaction in the U4/U6/U5 snRNP, facilitating the first covalent step of splicing. This is DEAD-box ATP-dependent RNA helicase 21 from Oryza sativa subsp. japonica (Rice).